A 393-amino-acid chain; its full sequence is Formate-dependent phosphoribosylglycinamide formyltransferase (393 aa).

N(1)-(5-phospho-beta-D-ribosyl)glycinamide contacts are provided by residues glutamate 22–leucine 23 and glutamate 82. ATP-binding positions include arginine 114, lysine 155, serine 160–glutamine 165, glutamate 195–valine 198, and glutamate 203. The ATP-grasp domain maps to leucine 119 to leucine 308. Positions 267 and 279 each coordinate Mg(2+). N(1)-(5-phospho-beta-D-ribosyl)glycinamide contacts are provided by residues aspartate 286, lysine 355, and arginine 362–arginine 363.

It belongs to the PurK/PurT family. Homodimer.

The enzyme catalyses N(1)-(5-phospho-beta-D-ribosyl)glycinamide + formate + ATP = N(2)-formyl-N(1)-(5-phospho-beta-D-ribosyl)glycinamide + ADP + phosphate + H(+). It participates in purine metabolism; IMP biosynthesis via de novo pathway; N(2)-formyl-N(1)-(5-phospho-D-ribosyl)glycinamide from N(1)-(5-phospho-D-ribosyl)glycinamide (formate route): step 1/1. Its function is as follows. Involved in the de novo purine biosynthesis. Catalyzes the transfer of formate to 5-phospho-ribosyl-glycinamide (GAR), producing 5-phospho-ribosyl-N-formylglycinamide (FGAR). Formate is provided by PurU via hydrolysis of 10-formyl-tetrahydrofolate. The polypeptide is Formate-dependent phosphoribosylglycinamide formyltransferase (Yersinia enterocolitica serotype O:8 / biotype 1B (strain NCTC 13174 / 8081)).